The chain runs to 105 residues: uncharacterized protein (105 aa).

It localises to the plastid. This is an uncharacterized protein from Euglena longa (Euglenophycean alga).